Consider the following 124-residue polypeptide: Fluoride-specific ion channel FluC (124 aa).

4 consecutive transmembrane segments (helical) span residues 1-21 (MGVV…RFLL), 35-55 (VGTL…FAYL), 68-88 (LLIT…YESF), and 99-119 (FLAY…LGYI). Positions 75 and 78 each coordinate Na(+).

The protein belongs to the fluoride channel Fluc/FEX (TC 1.A.43) family.

Its subcellular location is the cell inner membrane. The catalysed reaction is fluoride(in) = fluoride(out). Na(+) is not transported, but it plays an essential structural role and its presence is essential for fluoride channel function. Functionally, fluoride-specific ion channel. Important for reducing fluoride concentration in the cell, thus reducing its toxicity. This Aquifex aeolicus (strain VF5) protein is Fluoride-specific ion channel FluC.